The following is a 384-amino-acid chain: Inactive lipoate--protein ligase 2 (384 aa).

A BPL/LPL catalytic domain is found at 79–303; the sequence is NESKGNECIF…HIKHIINYKN (225 aa).

The protein resides in the mitochondrion. It is found in the plastid. It localises to the apicoplast. In the mitochondrion and together with LipL1, involved in the lipoylation of the E2 component of the branched chain alpha-ketoacid dehydrogenase complex BCKDH-E2/BCDH and the E2 component of the alpha -ketoglutarate dehydrogenase complex KDH. LipL1 is responsible for catalysing the activation of lipoate, forming lipoyl-AMP while LipL2 is required but is not capable of catalyzing this reaction. Although its role is unclear, it may catalyze the transfer of lipoyl groups from lipoyl-AMP to BCDH and KDH or act as an effector protein. The protein is Inactive lipoate--protein ligase 2 of Plasmodium falciparum (isolate 3D7).